A 195-amino-acid polypeptide reads, in one-letter code: CDP-diacylglycerol--glycerol-3-phosphate 3-phosphatidyltransferase (195 aa).

4 helical membrane passes run 7–24, 60–81, 134–150, and 157–173; these read ITVLRVLLIPIFILLFYL, FGAFLDPVADKLMVAVALVLLV, MLALVILLANPPAFTFW, and FLLIAGGLTLWSMLQYL.

The protein belongs to the CDP-alcohol phosphatidyltransferase class-I family.

Its subcellular location is the cell membrane. It catalyses the reaction a CDP-1,2-diacyl-sn-glycerol + sn-glycerol 3-phosphate = a 1,2-diacyl-sn-glycero-3-phospho-(1'-sn-glycero-3'-phosphate) + CMP + H(+). Its pathway is phospholipid metabolism; phosphatidylglycerol biosynthesis; phosphatidylglycerol from CDP-diacylglycerol: step 1/2. In terms of biological role, this protein catalyzes the committed step to the synthesis of the acidic phospholipids. This chain is CDP-diacylglycerol--glycerol-3-phosphate 3-phosphatidyltransferase (pgsA), found in Pseudomonas fluorescens.